The primary structure comprises 503 residues: uncharacterized protein (503 aa).

The protein belongs to the Mg-chelatase subunits D/I family. ComM subfamily.

This is an uncharacterized protein from Mycobacterium bovis (strain ATCC BAA-935 / AF2122/97).